Consider the following 73-residue polypeptide: uncharacterized protein (73 aa).

This is an uncharacterized protein from Schizosaccharomyces pombe (strain 972 / ATCC 24843) (Fission yeast).